We begin with the raw amino-acid sequence, 322 residues long: Undecaprenyl-phosphate 4-deoxy-4-formamido-L-arabinose transferase (322 aa).

Residues 1–235 (MFEIHPVKKV…TCLTTTPLRM (235 aa)) are Cytoplasmic-facing. The chain crosses the membrane as a helical span at residues 236-256 (LSLLGSIIAIGGFSIAVLLVI). Residues 257–269 (LRLTFGPQWAAEG) lie on the Periplasmic side of the membrane. A helical membrane pass occupies residues 270-290 (VFMLFAVLFTFIGAQFIGMGL). At 291-322 (LGEYIGRIYTDVRARPRYFVQQVIRPSSKENE) the chain is on the cytoplasmic side.

It belongs to the glycosyltransferase 2 family.

The protein localises to the cell inner membrane. It catalyses the reaction UDP-4-deoxy-4-formamido-beta-L-arabinose + di-trans,octa-cis-undecaprenyl phosphate = 4-deoxy-4-formamido-alpha-L-arabinopyranosyl di-trans,octa-cis-undecaprenyl phosphate + UDP. The protein operates within glycolipid biosynthesis; 4-amino-4-deoxy-alpha-L-arabinose undecaprenyl phosphate biosynthesis; 4-amino-4-deoxy-alpha-L-arabinose undecaprenyl phosphate from UDP-4-deoxy-4-formamido-beta-L-arabinose and undecaprenyl phosphate: step 1/2. It functions in the pathway bacterial outer membrane biogenesis; lipopolysaccharide biosynthesis. Functionally, catalyzes the transfer of 4-deoxy-4-formamido-L-arabinose from UDP to undecaprenyl phosphate. The modified arabinose is attached to lipid A and is required for resistance to polymyxin and cationic antimicrobial peptides. The sequence is that of Undecaprenyl-phosphate 4-deoxy-4-formamido-L-arabinose transferase from Escherichia coli O157:H7 (strain EC4115 / EHEC).